Consider the following 305-residue polypeptide: Nod factor export ATP-binding protein I (305 aa).

The region spanning 8-237 is the ABC transporter domain; the sequence is IDLVGVRKSF…HIGCNVIEIY (230 aa). 40–47 contacts ATP; that stretch reads GPNGAGKS.

This sequence belongs to the ABC transporter superfamily. Lipooligosaccharide exporter (TC 3.A.1.102) family. The complex is composed of two ATP-binding proteins (NodI) and two transmembrane proteins (NodJ).

It is found in the cell inner membrane. Part of the ABC transporter complex NodIJ involved in the export of the nodulation factors (Nod factors), the bacterial signal molecules that induce symbiosis and subsequent nodulation induction. Nod factors are LCO (lipo-chitin oligosaccharide), a modified beta-1,4-linked N-acetylglucosamine oligosaccharide. This subunit is responsible for energy coupling to the transport system. In Bradyrhizobium sp. (strain SNU001), this protein is Nod factor export ATP-binding protein I.